Reading from the N-terminus, the 682-residue chain is Protein ACTIVITY OF BC1 COMPLEX KINASE 1, chloroplastic (682 aa).

The transit peptide at 1-79 directs the protein to the chloroplast; the sequence is MESIHCNSLL…NSTDASVMTT (79 aa). Residues 236-567 enclose the Protein kinase domain; the sequence is KISSQTIAAA…IQVLFKDGVF (332 aa). ATP contacts are provided by residues 242-250 and Lys265; that span reads IAAASLGQV. Asp400 functions as the Proton acceptor in the catalytic mechanism.

This sequence belongs to the protein kinase superfamily. ADCK protein kinase family. In terms of assembly, interacts with ABC1K3 in plastoglobules (PG). Expressed in all tissues (e.g. especially in leaves) at all developmental stages from seed germination to flowering, except in the root tips.

It localises to the plastid. The protein localises to the chloroplast. The protein resides in the plastoglobule. It catalyses the reaction L-seryl-[protein] + ATP = O-phospho-L-seryl-[protein] + ADP + H(+). It carries out the reaction L-threonyl-[protein] + ATP = O-phospho-L-threonyl-[protein] + ADP + H(+). Functionally, kinase that can phosphorylate the tocopherol cyclase VTE1, a key enzyme of tocopherol (vitamin E) metabolism and involved in the recycling of oxidated alpha-tocopherol quinone, possibly stabilizing it at plastoglobules. Also regulates plastoglobule protein composition. Prevents photodamage of chloroplasts under continuous red light, thus working in opposition to ABC1K3. Together with ABC1K1, contributes to plastoglobule (PG) function in prenyl-lipid metabolism, stress response, and thylakoid remodeling. Involved in chlorophyll degradation and in the maintenance of the number of chlorophyll-binding photosynthetic thylakoid membranes. Ensures photosynthetic electron transport by regulating the homeostasis of plastoquinone, beta-carotene and xanthophyll lutein, as well as membrane antioxidant tocopherol metabolism. Seems to affect specifically stability or turnover of D1 protein, product of psbA, one of the four core subunits of the photosystem II (PSII). Required for photooxidative stress responses, including the induction of oxidative stress response genes (e.g. FSD1, CSD1, CAT1, and UTG71C1), to prevent photosystem II core and chlorophyll degradations. The chain is Protein ACTIVITY OF BC1 COMPLEX KINASE 1, chloroplastic from Arabidopsis thaliana (Mouse-ear cress).